The chain runs to 294 residues: 4-diphosphocytidyl-2-C-methyl-D-erythritol kinase (294 aa).

Lysine 11 is an active-site residue. 96–106 (PVAAGIGGGSA) contributes to the ATP binding site. Aspartate 138 is a catalytic residue.

It belongs to the GHMP kinase family. IspE subfamily.

The enzyme catalyses 4-CDP-2-C-methyl-D-erythritol + ATP = 4-CDP-2-C-methyl-D-erythritol 2-phosphate + ADP + H(+). It functions in the pathway isoprenoid biosynthesis; isopentenyl diphosphate biosynthesis via DXP pathway; isopentenyl diphosphate from 1-deoxy-D-xylulose 5-phosphate: step 3/6. In terms of biological role, catalyzes the phosphorylation of the position 2 hydroxy group of 4-diphosphocytidyl-2C-methyl-D-erythritol. This Rhodopseudomonas palustris (strain BisB5) protein is 4-diphosphocytidyl-2-C-methyl-D-erythritol kinase.